Here is a 1235-residue protein sequence, read N- to C-terminus: ATP-dependent helicase/nuclease subunit A (1235 aa).

One can recognise a UvrD-like helicase ATP-binding domain in the interval 12–482 (SLWTDDQWKA…IDLSQNFRSR (471 aa)). 33–40 (AAAGSGKT) lines the ATP pocket. The UvrD-like helicase C-terminal domain occupies 509–800 (AAELTLGANF…RMMTIHASKG (292 aa)).

It belongs to the helicase family. AddA subfamily. As to quaternary structure, heterodimer of AddA and AddB/RexB. The cofactor is Mg(2+).

The catalysed reaction is Couples ATP hydrolysis with the unwinding of duplex DNA by translocating in the 3'-5' direction.. It carries out the reaction ATP + H2O = ADP + phosphate + H(+). Its function is as follows. The heterodimer acts as both an ATP-dependent DNA helicase and an ATP-dependent, dual-direction single-stranded exonuclease. Recognizes the chi site generating a DNA molecule suitable for the initiation of homologous recombination. The AddA nuclease domain is required for chi fragment generation; this subunit has the helicase and 3' -&gt; 5' nuclease activities. This Listeria monocytogenes serovar 1/2a (strain ATCC BAA-679 / EGD-e) protein is ATP-dependent helicase/nuclease subunit A.